The following is a 555-amino-acid chain: Glutamine--tRNA ligase (555 aa).

The short motif at 34–44 is the 'HIGH' region element; that stretch reads PEPNGYLHIGH. ATP contacts are provided by residues 35–37 and 41–47; these read EPN and HIGHAKS. L-glutamine-binding residues include D67 and Y212. Residues T231, 261–262, and 269–271 each bind ATP; these read RL and MSK. Residues 268–272 carry the 'KMSKS' region motif; that stretch reads IMSKR.

The protein belongs to the class-I aminoacyl-tRNA synthetase family. In terms of assembly, monomer.

The protein resides in the cytoplasm. It carries out the reaction tRNA(Gln) + L-glutamine + ATP = L-glutaminyl-tRNA(Gln) + AMP + diphosphate. The polypeptide is Glutamine--tRNA ligase (Yersinia pseudotuberculosis serotype O:3 (strain YPIII)).